A 174-amino-acid chain; its full sequence is NADH-quinone oxidoreductase subunit B (174 aa).

Positions 53, 54, 118, and 148 each coordinate [4Fe-4S] cluster.

Belongs to the complex I 20 kDa subunit family. In terms of assembly, NDH-1 is composed of 14 different subunits. Subunits NuoB, C, D, E, F, and G constitute the peripheral sector of the complex. Requires [4Fe-4S] cluster as cofactor.

The protein resides in the cell inner membrane. The catalysed reaction is a quinone + NADH + 5 H(+)(in) = a quinol + NAD(+) + 4 H(+)(out). NDH-1 shuttles electrons from NADH, via FMN and iron-sulfur (Fe-S) centers, to quinones in the respiratory chain. Couples the redox reaction to proton translocation (for every two electrons transferred, four hydrogen ions are translocated across the cytoplasmic membrane), and thus conserves the redox energy in a proton gradient. In Ruegeria sp. (strain TM1040) (Silicibacter sp.), this protein is NADH-quinone oxidoreductase subunit B.